The following is a 610-amino-acid chain: Glutamine--fructose-6-phosphate aminotransferase [isomerizing] (610 aa).

Residue Cys-2 is the Nucleophile; for GATase activity of the active site. Residues 2–221 (CGIVGAVAQR…DGDVVDLQLA (220 aa)) enclose the Glutamine amidotransferase type-2 domain. SIS domains lie at 286 to 426 (AYKV…TRGR) and 459 to 600 (WADR…VDKP). The active-site For Fru-6P isomerization activity is Lys-605.

In terms of assembly, homodimer.

It localises to the cytoplasm. The catalysed reaction is D-fructose 6-phosphate + L-glutamine = D-glucosamine 6-phosphate + L-glutamate. Catalyzes the first step in hexosamine metabolism, converting fructose-6P into glucosamine-6P using glutamine as a nitrogen source. The protein is Glutamine--fructose-6-phosphate aminotransferase [isomerizing] of Bordetella bronchiseptica (strain ATCC BAA-588 / NCTC 13252 / RB50) (Alcaligenes bronchisepticus).